Reading from the N-terminus, the 352-residue chain is Pheromone-regulated membrane protein 6 (352 aa).

Topologically, residues 1 to 36 (MESSLQKLKFQDIDINLIPTAKWTTKLQYILYTWCQ) are extracellular. Residues 37 to 57 (SILHVAMFFSDIYTCIKLLAF) traverse the membrane as a helical segment. The Cytoplasmic portion of the chain corresponds to 58-76 (NTWSNNIIQPFLEFRISKW). Residues 77-97 (LFSGCILCSSLILIWELVIGL) form a helical membrane-spanning segment. The Extracellular portion of the chain corresponds to 98–227 (RVYRKKEITS…VILSFMLFSF (130 aa)). Residues 228 to 248 (IIWVILISKLILSIIIFIIFI) traverse the membrane as a helical segment. At 249-352 (RPRFLSSKRK…FPQKYKHKYI (104 aa)) the chain is on the cytoplasmic side.

Belongs to the KCH1 low affinity K(+) transporter family.

The protein localises to the cell membrane. It localises to the bud tip. The protein resides in the vacuole lumen. It catalyses the reaction K(+)(in) = K(+)(out). In terms of biological role, low affinity potassium transporter that, with KCH1, participates in high-affinity Ca(2+) influx system (HACS) activation during the response to mating pheromone. Directly promotes K(+) influx and HACS may electrochemically respond to this K(+) influx. KCH1 and PRM6/KCH2 act at the apex of the calcium signaling pathway that is used for survival during prolonged exposures to mating pheromones. In Saccharomyces cerevisiae (strain ATCC 204508 / S288c) (Baker's yeast), this protein is Pheromone-regulated membrane protein 6.